Reading from the N-terminus, the 249-residue chain is DNA polymerase sliding clamp (249 aa).

The protein belongs to the PCNA family. Homotrimer which circularizes head-to-tail (head is a N-terminus, tail is at C-terminus) to form a toroid. RFC opens the toroid so it can load on DNA. Interacts with both Pol I (pol) and Pol II (polB-polC), with Hel308 (hjm) and with Hjc. Interaction with the C-terminal PIP-box of RfcL may stabilize the toroidal structure.

In terms of biological role, sliding clamp subunit that acts as a moving platform for DNA processing. Responsible for tethering the catalytic subunit of DNA polymerase to DNA during high-speed replication. Unlike its eukaryotic paralog, loads on circular DNA without the replication factor C (RFC) clamp loader, although RFC greatly increases loading efficiency. Stimulates the ATPase activity of replication factor C (RFC) in the presence of ssDNA. Stimulates the helicase activity of Hel308 and may alter its substrate specificity. In Pyrococcus furiosus (strain ATCC 43587 / DSM 3638 / JCM 8422 / Vc1), this protein is DNA polymerase sliding clamp.